The sequence spans 490 residues: Scarecrow-like transcription factor PAT1 (490 aa).

In terms of domain architecture, GRAS spans 110 to 490; sequence TLEAISRRDL…RDLVASCAWK (381 aa). A leucine repeat I (LRI) region spans residues 117 to 178; that stretch reads RDLRADLVSC…AQLASSGSSI (62 aa). Residues 197 to 262 are VHIID; that stretch reads MHILYEVCPY…GGPPRIRITG (66 aa). The short motif at 228–232 is the VHIID element; sequence VHIID. The tract at residues 278–310 is leucine repeat II (LRII); it reads IVGNRLAKLAKQFNVPFEFNSVSVSVSEVKPKN. Residues 319–413 are PFYRE; sequence LAVNFAFVLH…QHCLARDVVN (95 aa). Positions 416 to 490 are SAW; sequence ACEGADRVER…RDLVASCAWK (75 aa).

Belongs to the GRAS family.

It is found in the cytoplasm. Its function is as follows. Probable transcription factor involved in phytochrome A (phyA) signal transduction. This is Scarecrow-like transcription factor PAT1 (PAT1) from Arabidopsis thaliana (Mouse-ear cress).